Here is a 335-residue protein sequence, read N- to C-terminus: Biotin synthase (335 aa).

One can recognise a Radical SAM core domain in the interval Y51–R281. [4Fe-4S] cluster is bound by residues C66, C70, and C73. Residues C112, C144, C204, and R276 each contribute to the [2Fe-2S] cluster site.

The protein belongs to the radical SAM superfamily. Biotin synthase family. As to quaternary structure, homodimer. The cofactor is [4Fe-4S] cluster. Requires [2Fe-2S] cluster as cofactor.

The enzyme catalyses (4R,5S)-dethiobiotin + (sulfur carrier)-SH + 2 reduced [2Fe-2S]-[ferredoxin] + 2 S-adenosyl-L-methionine = (sulfur carrier)-H + biotin + 2 5'-deoxyadenosine + 2 L-methionine + 2 oxidized [2Fe-2S]-[ferredoxin]. It participates in cofactor biosynthesis; biotin biosynthesis; biotin from 7,8-diaminononanoate: step 2/2. In terms of biological role, catalyzes the conversion of dethiobiotin (DTB) to biotin by the insertion of a sulfur atom into dethiobiotin via a radical-based mechanism. This is Biotin synthase from Prochlorococcus marinus (strain MIT 9303).